The primary structure comprises 399 residues: Enoyl-[acyl-carrier-protein] reductase [NADH] 2 (399 aa).

NAD(+) is bound by residues 48–53, 75–76, 112–113, and 141–142; these read GASSGF, FE, DA, and LA. Y227 lines the substrate pocket. Y237 functions as the Proton donor in the catalytic mechanism. NAD(+)-binding positions include K246 and 275–277; that span reads LVT.

It belongs to the TER reductase family. As to quaternary structure, monomer.

The catalysed reaction is a 2,3-saturated acyl-[ACP] + NAD(+) = a (2E)-enoyl-[ACP] + NADH + H(+). It participates in lipid metabolism; fatty acid biosynthesis. In terms of biological role, involved in the final reduction of the elongation cycle of fatty acid synthesis (FAS II). Catalyzes the reduction of a carbon-carbon double bond in an enoyl moiety that is covalently linked to an acyl carrier protein (ACP). This Vibrio parahaemolyticus serotype O3:K6 (strain RIMD 2210633) protein is Enoyl-[acyl-carrier-protein] reductase [NADH] 2.